The primary structure comprises 647 residues: Macrolide export ATP-binding/permease protein MacB (647 aa).

An ABC transporter domain is found at 6 to 244 (LEISGCYRTF…VDTAVTKINN (239 aa)). An ATP-binding site is contributed by 42 to 49 (GASGSGKS). Transmembrane regions (helical) follow at residues 273-293 (FLTM…VALG), 522-542 (LLIS…VMNI), 577-597 (LVCL…GVVF), and 612-632 (SIVA…FLPA).

Belongs to the ABC transporter superfamily. Macrolide exporter (TC 3.A.1.122) family. As to quaternary structure, homodimer. Part of the tripartite efflux system MacAB-TolC, which is composed of an inner membrane transporter, MacB, a periplasmic membrane fusion protein, MacA, and an outer membrane component, TolC. The complex forms a large protein conduit and can translocate molecules across both the inner and outer membranes. Interacts with MacA.

The protein localises to the cell inner membrane. Part of the tripartite efflux system MacAB-TolC. MacB is a non-canonical ABC transporter that contains transmembrane domains (TMD), which form a pore in the inner membrane, and an ATP-binding domain (NBD), which is responsible for energy generation. Confers resistance against macrolides. This is Macrolide export ATP-binding/permease protein MacB from Shewanella sp. (strain W3-18-1).